Consider the following 280-residue polypeptide: Probable endonuclease 4 (280 aa).

Residues His-69, His-109, Glu-145, Asp-179, His-182, His-216, Asp-229, His-231, and Glu-261 each contribute to the Zn(2+) site.

This sequence belongs to the AP endonuclease 2 family. The cofactor is Zn(2+).

The enzyme catalyses Endonucleolytic cleavage to 5'-phosphooligonucleotide end-products.. Endonuclease IV plays a role in DNA repair. It cleaves phosphodiester bonds at apurinic or apyrimidinic (AP) sites, generating a 3'-hydroxyl group and a 5'-terminal sugar phosphate. The chain is Probable endonuclease 4 from Actinobacillus pleuropneumoniae serotype 5b (strain L20).